The primary structure comprises 98 residues: Large ribosomal subunit protein uL23 (98 aa).

This sequence belongs to the universal ribosomal protein uL23 family. Part of the 50S ribosomal subunit. Contacts protein L29, and trigger factor when it is bound to the ribosome.

One of the early assembly proteins it binds 23S rRNA. One of the proteins that surrounds the polypeptide exit tunnel on the outside of the ribosome. Forms the main docking site for trigger factor binding to the ribosome. This chain is Large ribosomal subunit protein uL23, found in Alcanivorax borkumensis (strain ATCC 700651 / DSM 11573 / NCIMB 13689 / SK2).